Consider the following 380-residue polypeptide: Flap endonuclease 1 (380 aa).

Positions 1 to 104 are N-domain; sequence MGIQGLAKLI…GELAKRSERR (104 aa). Residue arginine 19 is modified to Symmetric dimethylarginine; by PRMT5. Residue aspartate 34 participates in Mg(2+) binding. Positions 47 and 70 each coordinate DNA. An N6-acetyllysine modification is found at lysine 80. Aspartate 86 is a Mg(2+) binding site. A symmetric dimethylarginine; by PRMT5 mark is found at arginine 100 and arginine 104. The interval 122–253 is I-domain; that stretch reads EVEKFTKRLV…KRAVDLIQKH (132 aa). Glutamate 158, glutamate 160, aspartate 179, and aspartate 181 together coordinate Mg(2+). A DNA-binding site is contributed by glutamate 158. Serine 187 is modified (phosphoserine; by CDK2). Arginine 192 carries the post-translational modification Symmetric dimethylarginine; by PRMT5. Phosphoserine is present on serine 197. DNA contacts are provided by glycine 231 and aspartate 233. A Mg(2+)-binding site is contributed by aspartate 233. Residues serine 255, serine 293, and serine 335 each carry the phosphoserine modification. The tract at residues 327-380 is disordered; it reads RLSKSRQGSTQGRLDDFFKVTGSLSSAKRKEPEPKGSTKKKAKTGAAGKFKRGK. Threonine 336 is modified (phosphothreonine). The tract at residues 336–344 is interaction with PCNA; that stretch reads TQGRLDDFF. Lysine 354 is modified (N6-acetyllysine). Over residues 363–380 the composition is skewed to basic residues; that stretch reads STKKKAKTGAAGKFKRGK. Position 364 is a phosphothreonine (threonine 364). N6-acetyllysine occurs at positions 375, 377, and 380.

This sequence belongs to the XPG/RAD2 endonuclease family. FEN1 subfamily. In terms of assembly, interacts with PCNA. Three molecules of FEN1 bind to one PCNA trimer with each molecule binding to one PCNA monomer. PCNA stimulates the nuclease activity without altering cleavage specificity. The C-terminal domain binds EP300; can bind simultaneously to both PCNA and EP300. Interacts with DDX11; this interaction is direct and increases flap endonuclease activity of FEN1. Interacts with WDR4; regulating its endonuclease activity. Interacts with POLB. It depends on Mg(2+) as a cofactor. In terms of processing, acetylated by EP300. Acetylation inhibits both endonuclease and exonuclease activity. Acetylation also reduces DNA-binding activity but does not affect interaction with PCNA or EP300. Phosphorylation upon DNA damage induces relocalization to the nuclear plasma. Phosphorylation at Ser-187 by CDK2 occurs during late S-phase and results in dissociation from PCNA. Post-translationally, methylation at Arg-192 by PRMT5 impedes Ser-187 phosphorylation and increases interaction with PCNA.

It is found in the nucleus. Its subcellular location is the nucleolus. The protein resides in the nucleoplasm. It localises to the mitochondrion. In terms of biological role, structure-specific nuclease with 5'-flap endonuclease and 5'-3' exonuclease activities involved in DNA replication and repair. During DNA replication, cleaves the 5'-overhanging flap structure that is generated by displacement synthesis when DNA polymerase encounters the 5'-end of a downstream Okazaki fragment. It enters the flap from the 5'-end and then tracks to cleave the flap base, leaving a nick for ligation. Also involved in the long patch base excision repair (LP-BER) pathway, by cleaving within the apurinic/apyrimidinic (AP) site-terminated flap. Acts as a genome stabilization factor that prevents flaps from equilibrating into structures that lead to duplications and deletions. Also possesses 5'-3' exonuclease activity on nicked or gapped double-stranded DNA, and exhibits RNase H activity. Also involved in replication and repair of rDNA and in repairing mitochondrial DNA. This Macaca fascicularis (Crab-eating macaque) protein is Flap endonuclease 1.